The primary structure comprises 1032 residues: Error-prone DNA polymerase (1032 aa).

Belongs to the DNA polymerase type-C family. DnaE2 subfamily.

The protein localises to the cytoplasm. It catalyses the reaction DNA(n) + a 2'-deoxyribonucleoside 5'-triphosphate = DNA(n+1) + diphosphate. Its function is as follows. DNA polymerase involved in damage-induced mutagenesis and translesion synthesis (TLS). It is not the major replicative DNA polymerase. The protein is Error-prone DNA polymerase of Hahella chejuensis (strain KCTC 2396).